The sequence spans 337 residues: Ornithine carbamoyltransferase, catabolic (337 aa).

Residues Ser57–Thr60, Gln84, Arg108, and His135–Gln138 contribute to the carbamoyl phosphate site. Residues Asn167, Asp231, and Ser235 to Met236 contribute to the L-ornithine site. Carbamoyl phosphate is bound by residues Cys272–Leu273 and Arg317.

It belongs to the aspartate/ornithine carbamoyltransferase superfamily. OTCase family.

It localises to the cytoplasm. It carries out the reaction carbamoyl phosphate + L-ornithine = L-citrulline + phosphate + H(+). It participates in amino-acid degradation; L-arginine degradation via ADI pathway; carbamoyl phosphate from L-arginine: step 2/2. Functionally, reversibly catalyzes the transfer of the carbamoyl group from carbamoyl phosphate (CP) to the N(epsilon) atom of ornithine (ORN) to produce L-citrulline. In Streptococcus agalactiae, this protein is Ornithine carbamoyltransferase, catabolic (arcB).